The sequence spans 503 residues: Potassium voltage-gated channel subfamily V member 1 (503 aa).

Disordered stretches follow at residues 1–20 (MDLSPRNRPLLDSSSLDSGS) and 171–192 (KKDTDDQESQHESEQDFSQGPC). At 3-213 (LSPRNRPLLD…EKPGSSTAAR (211 aa)) the chain is on the cytoplasmic side. The span at 10-20 (LLDSSSLDSGS) shows a compositional bias: low complexity. The segment covering 171-184 (KKDTDDQESQHESE) has biased composition (basic and acidic residues). A helical membrane pass occupies residues 214–234 (IFGVISIIFVAVSIVNMALMS). At 235–241 (AELSWLN) the chain is on the extracellular side. Residues 242-262 (LQLLEILEYVCISWFTGEFIL) traverse the membrane as a helical segment. At 263 to 279 (RFLCVKDRCHFLRKVPN) the chain is on the cytoplasmic side. The helical transmembrane segment at 280-300 (IIDLLAILPFYITLLVESLSG) threads the bilayer. Topologically, residues 301–312 (SHTTQELENVGR) are extracellular. Residues 313 to 334 (LVQVLRLLRALRMLKLGRHSTG) form a helical; Voltage-sensor membrane-spanning segment. The Cytoplasmic segment spans residues 335 to 348 (LRSLGMTITQCYEE). The chain crosses the membrane as a helical span at residues 349 to 369 (VGLLLLFLSVGISIFSTIEYF). A Selectivity filter motif is present at residues 395-400 (TVGYGD). Residues 410–430 (IVAFMCILSGILVLALPIAII) traverse the membrane as a helical segment. At 431–503 (NDRFSACYFT…RSSGGDDFWF (73 aa)) the chain is on the cytoplasmic side.

The protein belongs to the potassium channel family. V (TC 1.A.1.2) subfamily. Kv8.1/KCNV1 sub-subfamily. Heteromultimer with KCNB1 and KCNB2. Interacts with KCNC4 and KCND1. Detected in brain, in neocortex, olfactory tubercle, hippocampus, dentate gyrus, piriform cortex and amygdala. Detected in Purkinje cells and granular cells of the cerebellum, in hippocampal CA4 neurons and neocortex pyramidal cells.

The protein resides in the cell membrane. In terms of biological role, potassium channel subunit that does not form functional channels by itself. Modulates KCNB1 and KCNB2 channel activity by shifting the threshold for inactivation to more negative values and by slowing the rate of inactivation. Can down-regulate the channel activity of KCNB1, KCNB2, KCNC4 and KCND1, possibly by trapping them in intracellular membranes. The sequence is that of Potassium voltage-gated channel subfamily V member 1 (Kcnv1) from Rattus norvegicus (Rat).